A 948-amino-acid chain; its full sequence is Protocadherin alpha-2 (948 aa).

A signal peptide spans 1–22; sequence MASSIRRGLGAWTRLLSLLLLA. The Extracellular segment spans residues 23–697; sequence AWEVGSGQLR…GSEATLVDVN (675 aa). 6 Cadherin domains span residues 30–133, 157–242, 243–350, 351–455, 456–565, and 588–678; these read QLRY…PPVF, ASDA…EPTF, AQSV…TPEV, SITS…APAF, AQPE…APAL, and GHVV…APKA. N-linked (GlcNAc...) asparagine glycans are attached at residues asparagine 257, asparagine 265, asparagine 362, and asparagine 548. A helical transmembrane segment spans residues 698–718; that stretch reads VYLIIAICAVSSLLVLTVLLY. Topologically, residues 719 to 948 are cytoplasmic; it reads TALRCSVPAT…GNSTTDNSDQ (230 aa). Residues 734 to 737 form a PXXP 1 repeat; that stretch reads PGKP. Residues 734–892 form a 5 X 4 AA repeats of P-X-X-P region; that stretch reads PGKPTLVCSS…PDKFIIPGSP (159 aa). Disordered stretches follow at residues 755 to 801, 829 to 854, and 868 to 948; these read RQRV…RQPN, GPGG…EVSP, and KYGP…NSDQ. The segment covering 783-795 has biased composition (basic and acidic residues); the sequence is AEEKQLSESEYVG. 4 PXXP repeats span residues 797–800, 830–833, 871–874, and 889–892; these read PRQP, PGGP, PGNP, and PGSP. The span at 907–921 shows a compositional bias: basic and acidic residues; it reads DKSDFITFGKKEETK.

Its subcellular location is the cell membrane. Functionally, potential calcium-dependent cell-adhesion protein. May be involved in the establishment and maintenance of specific neuronal connections in the brain. The polypeptide is Protocadherin alpha-2 (PCDHA2) (Pan troglodytes (Chimpanzee)).